The sequence spans 188 residues: Ribosome maturation factor RimM (188 aa).

One can recognise a PRC barrel domain in the interval S112–W187.

The protein belongs to the RimM family. As to quaternary structure, binds ribosomal protein uS19.

It is found in the cytoplasm. Functionally, an accessory protein needed during the final step in the assembly of 30S ribosomal subunit, possibly for assembly of the head region. Essential for efficient processing of 16S rRNA. May be needed both before and after RbfA during the maturation of 16S rRNA. It has affinity for free ribosomal 30S subunits but not for 70S ribosomes. This is Ribosome maturation factor RimM from Polynucleobacter asymbioticus (strain DSM 18221 / CIP 109841 / QLW-P1DMWA-1) (Polynucleobacter necessarius subsp. asymbioticus).